We begin with the raw amino-acid sequence, 701 residues long: Elongation factor G (701 aa).

Residues 8–290 (ARYRNIGISA…AVIEYLPAPT (283 aa)) form the tr-type G domain. GTP-binding positions include 17–24 (AHIDAGKT), 88–92 (DTPGH), and 142–145 (NKMD).

Belongs to the TRAFAC class translation factor GTPase superfamily. Classic translation factor GTPase family. EF-G/EF-2 subfamily.

It localises to the cytoplasm. Catalyzes the GTP-dependent ribosomal translocation step during translation elongation. During this step, the ribosome changes from the pre-translocational (PRE) to the post-translocational (POST) state as the newly formed A-site-bound peptidyl-tRNA and P-site-bound deacylated tRNA move to the P and E sites, respectively. Catalyzes the coordinated movement of the two tRNA molecules, the mRNA and conformational changes in the ribosome. This chain is Elongation factor G, found in Sodalis glossinidius (strain morsitans).